We begin with the raw amino-acid sequence, 69 residues long: Conotoxin Cal12.1p4 (69 aa).

A propeptide spanning residues 1 to 23 is cleaved from the precursor; that stretch reads DLITNSYTRGKPRHVTSWRNLKT.

Contains 4 disulfide bonds. In terms of tissue distribution, expressed by the venom duct.

Its subcellular location is the secreted. The sequence is that of Conotoxin Cal12.1p4 from Californiconus californicus (California cone).